The primary structure comprises 474 residues: Ribulose bisphosphate carboxylase large chain (474 aa).

Substrate-binding residues include Asn-122 and Thr-172. Lys-174 serves as the catalytic Proton acceptor. A substrate-binding site is contributed by Lys-176. Residues Lys-200, Asp-202, and Glu-203 each coordinate Mg(2+). N6-carboxylysine is present on Lys-200. Catalysis depends on His-293, which acts as the Proton acceptor. Substrate-binding residues include Arg-294, His-326, and Ser-378.

Belongs to the RuBisCO large chain family. Type I subfamily. Heterohexadecamer of 8 large chains and 8 small chains; disulfide-linked. The disulfide link is formed within the large subunit homodimers. Requires Mg(2+) as cofactor. The disulfide bond which can form in the large chain dimeric partners within the hexadecamer appears to be associated with oxidative stress and protein turnover.

It localises to the carboxysome. The catalysed reaction is 2 (2R)-3-phosphoglycerate + 2 H(+) = D-ribulose 1,5-bisphosphate + CO2 + H2O. It catalyses the reaction D-ribulose 1,5-bisphosphate + O2 = 2-phosphoglycolate + (2R)-3-phosphoglycerate + 2 H(+). Functionally, ruBisCO catalyzes two reactions: the carboxylation of D-ribulose 1,5-bisphosphate, the primary event in carbon dioxide fixation, as well as the oxidative fragmentation of the pentose substrate in the photorespiration process. Both reactions occur simultaneously and in competition at the same active site. This chain is Ribulose bisphosphate carboxylase large chain, found in Synechococcus sp. (strain JA-2-3B'a(2-13)) (Cyanobacteria bacterium Yellowstone B-Prime).